A 490-amino-acid polypeptide reads, in one-letter code: Cobyric acid synthase (490 aa).

Positions 252 to 428 (ARRVAVVRLP…WHGAFEGDAL (177 aa)) constitute a GATase cobBQ-type domain. Cys333 serves as the catalytic Nucleophile. The active site involves His420.

It belongs to the CobB/CobQ family. CobQ subfamily.

It functions in the pathway cofactor biosynthesis; adenosylcobalamin biosynthesis. Catalyzes amidations at positions B, D, E, and G on adenosylcobyrinic A,C-diamide. NH(2) groups are provided by glutamine, and one molecule of ATP is hydrogenolyzed for each amidation. The chain is Cobyric acid synthase from Mycolicibacterium vanbaalenii (strain DSM 7251 / JCM 13017 / BCRC 16820 / KCTC 9966 / NRRL B-24157 / PYR-1) (Mycobacterium vanbaalenii).